Reading from the N-terminus, the 417-residue chain is Imidazolonepropionase (417 aa).

Residues H80 and H82 each contribute to the Fe(3+) site. Zn(2+)-binding residues include H80 and H82. Positions 89, 152, and 187 each coordinate 4-imidazolone-5-propanoate. Residue Y152 coordinates N-formimidoyl-L-glutamate. H252 is a binding site for Fe(3+). H252 contacts Zn(2+). E255 is a binding site for 4-imidazolone-5-propanoate. Fe(3+) is bound at residue D326. Position 326 (D326) interacts with Zn(2+). N328 and G330 together coordinate N-formimidoyl-L-glutamate. 4-imidazolone-5-propanoate is bound at residue S331.

This sequence belongs to the metallo-dependent hydrolases superfamily. HutI family. Requires Zn(2+) as cofactor. Fe(3+) is required as a cofactor.

The protein localises to the cytoplasm. The catalysed reaction is 4-imidazolone-5-propanoate + H2O = N-formimidoyl-L-glutamate. It participates in amino-acid degradation; L-histidine degradation into L-glutamate; N-formimidoyl-L-glutamate from L-histidine: step 3/3. Catalyzes the hydrolytic cleavage of the carbon-nitrogen bond in imidazolone-5-propanoate to yield N-formimidoyl-L-glutamate. It is the third step in the universal histidine degradation pathway. The protein is Imidazolonepropionase of Bacteroides thetaiotaomicron (strain ATCC 29148 / DSM 2079 / JCM 5827 / CCUG 10774 / NCTC 10582 / VPI-5482 / E50).